A 476-amino-acid chain; its full sequence is Glycogen synthase (476 aa).

Position 15 (lysine 15) interacts with ADP-alpha-D-glucose.

It belongs to the glycosyltransferase 1 family. Bacterial/plant glycogen synthase subfamily.

It carries out the reaction [(1-&gt;4)-alpha-D-glucosyl](n) + ADP-alpha-D-glucose = [(1-&gt;4)-alpha-D-glucosyl](n+1) + ADP + H(+). It functions in the pathway glycan biosynthesis; glycogen biosynthesis. In terms of biological role, synthesizes alpha-1,4-glucan chains using ADP-glucose. In Streptococcus equi subsp. equi (strain 4047), this protein is Glycogen synthase.